We begin with the raw amino-acid sequence, 961 residues long: Glycine dehydrogenase (decarboxylating) (961 aa).

N6-(pyridoxal phosphate)lysine is present on K709.

This sequence belongs to the GcvP family. The glycine cleavage system is composed of four proteins: P, T, L and H. Pyridoxal 5'-phosphate serves as cofactor.

It carries out the reaction N(6)-[(R)-lipoyl]-L-lysyl-[glycine-cleavage complex H protein] + glycine + H(+) = N(6)-[(R)-S(8)-aminomethyldihydrolipoyl]-L-lysyl-[glycine-cleavage complex H protein] + CO2. The glycine cleavage system catalyzes the degradation of glycine. The P protein binds the alpha-amino group of glycine through its pyridoxal phosphate cofactor; CO(2) is released and the remaining methylamine moiety is then transferred to the lipoamide cofactor of the H protein. This is Glycine dehydrogenase (decarboxylating) from Streptomyces avermitilis (strain ATCC 31267 / DSM 46492 / JCM 5070 / NBRC 14893 / NCIMB 12804 / NRRL 8165 / MA-4680).